Here is a 651-residue protein sequence, read N- to C-terminus: Acetyl-coenzyme A synthetase (651 aa).

CoA-binding positions include 190-193 (RGGR), Thr-309, and Asn-333. Residues 385 to 387 (GEP), 409 to 414 (DTWWQT), Asp-498, and Arg-513 contribute to the ATP site. Residue Ser-521 coordinates CoA. Arg-524 is a binding site for ATP. Residues Val-535, His-537, and Val-540 each coordinate Mg(2+). Arg-582 serves as a coordination point for CoA. An N6-acetyllysine modification is found at Lys-607.

It belongs to the ATP-dependent AMP-binding enzyme family. Mg(2+) is required as a cofactor. Post-translationally, acetylated. Deacetylation by the SIR2-homolog deacetylase activates the enzyme.

The enzyme catalyses acetate + ATP + CoA = acetyl-CoA + AMP + diphosphate. Its function is as follows. Catalyzes the conversion of acetate into acetyl-CoA (AcCoA), an essential intermediate at the junction of anabolic and catabolic pathways. AcsA undergoes a two-step reaction. In the first half reaction, AcsA combines acetate with ATP to form acetyl-adenylate (AcAMP) intermediate. In the second half reaction, it can then transfer the acetyl group from AcAMP to the sulfhydryl group of CoA, forming the product AcCoA. The chain is Acetyl-coenzyme A synthetase from Xanthobacter autotrophicus (strain ATCC BAA-1158 / Py2).